A 121-amino-acid chain; its full sequence is Basic phospholipase A2 3 (121 aa).

7 disulfide bridges follow: cysteine 26–cysteine 115, cysteine 28–cysteine 44, cysteine 43–cysteine 95, cysteine 49–cysteine 121, cysteine 50–cysteine 88, cysteine 57–cysteine 81, and cysteine 75–cysteine 86. 3 residues coordinate Ca(2+): tyrosine 27, glycine 29, and glycine 31. The active site involves histidine 47. Aspartate 48 lines the Ca(2+) pocket. Aspartate 89 is a catalytic residue.

This sequence belongs to the phospholipase A2 family. Group II subfamily. D49 sub-subfamily. Ca(2+) serves as cofactor. Expressed by the venom gland.

The protein resides in the secreted. It catalyses the reaction a 1,2-diacyl-sn-glycero-3-phosphocholine + H2O = a 1-acyl-sn-glycero-3-phosphocholine + a fatty acid + H(+). In terms of biological role, PLA2 catalyzes the calcium-dependent hydrolysis of the 2-acyl groups in 3-sn-phosphoglycerides. This is Basic phospholipase A2 3 from Daboia russelii (Russel's viper).